Here is a 713-residue protein sequence, read N- to C-terminus: TWiK family of potassium channels protein 12 (713 aa).

Residues 1–15 (MTLFKKIQWFCNLIR) are Cytoplasmic-facing. Residues 16–36 (LRSYYKFLLLIAYTAFGAWLF) form a helical membrane-spanning segment. N-linked (GlcNAc...) asparagine glycans are attached at residues Asn53, Asn77, and Asn98. An intramembrane region (pore-forming) is located at residues 112-132 (WTWTGAMFYAGQLYTTIGYGY). Residues 142–162 (ICTIFYALFGIPCFLMYLKIE) traverse the membrane as a helical segment. At 163–242 (NAIEWKKDKQ…AEERKKKPFP (80 aa)) the chain is on the cytoplasmic side. A helical transmembrane segment spans residues 243 to 263 (IPIAIIMLIIWICFSASMFCI). The segment at residues 267–287 (TWVFSSAVYFFIVSISTVGLG) is an intramembrane region (pore-forming). A helical membrane pass occupies residues 298–318 (VFNFLLILVGLALLSMCFELI). Residues 319 to 713 (TDRVAKWKQK…LSKRDASTMA (395 aa)) are Cytoplasmic-facing.

This sequence belongs to the two pore domain potassium channel (TC 1.A.1.8) family.

It localises to the membrane. This is TWiK family of potassium channels protein 12 (twk-12) from Caenorhabditis elegans.